A 426-amino-acid polypeptide reads, in one-letter code: 6-Hydroxy-7-prenyldeoxybrevianamide E synthase notC (426 aa).

Glutamate 94 lines the substrate pocket. Residues arginine 105, lysine 191, and tyrosine 193 each coordinate dimethylallyl diphosphate. A substrate-binding site is contributed by tyrosine 195. Dimethylallyl diphosphate contacts are provided by lysine 267, tyrosine 269, glutamine 352, tyrosine 354, tyrosine 418, and tyrosine 422.

This sequence belongs to the tryptophan dimethylallyltransferase family.

The catalysed reaction is 6-hydroxydeoxybrevianamide E + dimethylallyl diphosphate = notoamide S + diphosphate. It participates in alkaloid biosynthesis. With respect to regulation, addition of 5 mM Mg(2+), Ca(2+) or Mn(2+) slightly enhances catalysis (about 100-120%). Significant reduction of enzyme activity (2%-35%) is observed with Cu(2+), Zn(2+), Fe(2+), or Sn(2+) (5 mM). Its function is as follows. Prenyltransferase; part of the gene cluster that mediates the biosynthesis of notoamide, a fungal indole alkaloid that belongs to a family of natural products containing a characteristic bicyclo[2.2.2]diazaoctane core. The first step of notoamide biosynthesis involves coupling of L-proline and L-tryptophan by the bimodular NRPS notE, to produce cyclo-L-tryptophan-L-proline called brevianamide F. The reverse prenyltransferase notF then acts as a deoxybrevianamide E synthase and converts brevianamide F to deoxybrevianamide E via reverse prenylation at C-2 of the indole ring leading to the bicyclo[2.2.2]diazaoctane core. Deoxybrevianamide E is further hydroxylated at C-6 of the indole ring, likely catalyzed by the cytochrome P450 monooxygenase notG, to yield 6-hydroxy-deoxybrevianamide E. 6-hydroxy-deoxybrevianamide E is a specific substrate of the prenyltransferase notC for normal prenylation at C-7 to produce 6-hydroxy-7-prenyl-deoxybrevianamide, also called notoamide S. As the proposed pivotal branching point in notoamide biosynthesis, notoamide S can be diverted to notoamide E through an oxidative pyran ring closure putatively catalyzed by either notH cytochrome P450 monooxygenase or the notD FAD-linked oxidoreductase. This step would be followed by an indole 2,3-epoxidation-initiated pinacol-like rearrangement catalyzed by the notB FAD-dependent monooxygenase leading to the formation of notoamide C and notoamide D. On the other hand notoamide S is converted to notoamide T by notH (or notD), a bifunctional oxidase that also functions as the intramolecular Diels-Alderase responsible for generation of (+)-notoamide T. To generate antipodal (-)-notoaminide T, notH' (or notD') in Aspergillus versicolor is expected to catalyze a Diels-Alder reaction leading to the opposite stereochemistry. The remaining oxidoreductase notD (or notH) likely catalyzes the oxidative pyran ring formation to yield (+)-stephacidin A. The FAD-dependent monooxygenase notI is highly similar to notB and is predicted to catalyze a similar conversion from (+)-stephacidin A to (-)-notoamide B via the 2,3-epoxidation of (+)-stephacidin A followed by a pinacol-type rearrangement. Finally, it remains unclear which enzyme could be responsible for the final hydroxylation steps leading to notoamide A and sclerotiamide. This chain is 6-Hydroxy-7-prenyldeoxybrevianamide E synthase notC, found in Aspergillus sp. (strain MF297-2).